The sequence spans 370 residues: tRNA-specific 2-thiouridylase MnmA (370 aa).

ATP-binding positions include 12–19 and leucine 38; that span reads GMSGGVDS. The active-site Nucleophile is the cysteine 105. Residues cysteine 105 and cysteine 204 are joined by a disulfide bond. Glycine 129 lines the ATP pocket. The interval 153 to 155 is interaction with tRNA; it reads KDQ. Cysteine 204 (cysteine persulfide intermediate) is an active-site residue. Residues 310-311 are interaction with tRNA; it reads RY.

It belongs to the MnmA/TRMU family.

The protein localises to the cytoplasm. The enzyme catalyses S-sulfanyl-L-cysteinyl-[protein] + uridine(34) in tRNA + AH2 + ATP = 2-thiouridine(34) in tRNA + L-cysteinyl-[protein] + A + AMP + diphosphate + H(+). Its function is as follows. Catalyzes the 2-thiolation of uridine at the wobble position (U34) of tRNA, leading to the formation of s(2)U34. The sequence is that of tRNA-specific 2-thiouridylase MnmA from Desulfitobacterium hafniense (strain Y51).